Consider the following 286-residue polypeptide: Shikimate dehydrogenase (NADP(+)) (286 aa).

Residues 19–21 (SVS) and T66 each bind shikimate. K70 serves as the catalytic Proton acceptor. Shikimate contacts are provided by N91 and D106. Residues 130–134 (GAGGS) and A225 each bind NADP(+). Y227 contacts shikimate. G248 is a binding site for NADP(+).

This sequence belongs to the shikimate dehydrogenase family. As to quaternary structure, homodimer.

It carries out the reaction shikimate + NADP(+) = 3-dehydroshikimate + NADPH + H(+). It functions in the pathway metabolic intermediate biosynthesis; chorismate biosynthesis; chorismate from D-erythrose 4-phosphate and phosphoenolpyruvate: step 4/7. Involved in the biosynthesis of the chorismate, which leads to the biosynthesis of aromatic amino acids. Catalyzes the reversible NADPH linked reduction of 3-dehydroshikimate (DHSA) to yield shikimate (SA). The polypeptide is Shikimate dehydrogenase (NADP(+)) (Dehalococcoides mccartyi (strain ATCC BAA-2266 / KCTC 15142 / 195) (Dehalococcoides ethenogenes (strain 195))).